We begin with the raw amino-acid sequence, 126 residues long: Large ribosomal subunit protein bL12 (126 aa).

This sequence belongs to the bacterial ribosomal protein bL12 family. Homodimer. Part of the ribosomal stalk of the 50S ribosomal subunit. Forms a multimeric L10(L12)X complex, where L10 forms an elongated spine to which 2 to 4 L12 dimers bind in a sequential fashion. Binds GTP-bound translation factors.

Functionally, forms part of the ribosomal stalk which helps the ribosome interact with GTP-bound translation factors. Is thus essential for accurate translation. In Nitrosospira multiformis (strain ATCC 25196 / NCIMB 11849 / C 71), this protein is Large ribosomal subunit protein bL12.